The chain runs to 357 residues: Fulicin peptides (357 aa).

An N-terminal signal peptide occupies residues 1–17; sequence MQPTVLLILMTSCLTYQ. Positions 18–119 are excised as a propeptide; the sequence is VIADKPKGNH…VDGSQGHLEP (102 aa). A D-asparagine modification is found at Asn-123. The residue at position 126 (Val-126) is a Valine amide. A propeptide spanning residues 130-194 is cleaved from the precursor; sequence NTLPEEAGSF…YNTMNEDEAS (65 aa). Valine amide occurs at positions 201 and 209. Leucine amide occurs at positions 217 and 226. Residues Ile-233 and Ile-242 each carry the isoleucine amide modification. Valine amide is present on residues Val-250 and Val-259. A propeptide spanning residues 263–298 is cleaved from the precursor; sequence NQGVFTVSPSSTKISFDDNYLPYLSSVDAGDLSDVN. Leu-305 bears the Leucine amide mark. The propeptide occupies 311–357; sequence TAEQDETSQRSNERLVALLQNTGFRKRLSRMLQNQRLVEHYPEFIGK.

In terms of tissue distribution, found in central ganglia and the ventricles and atria of the heart.

Its function is as follows. Potentiates tetanic contraction of the penis retractor muscle at very low concentrations, and also shows modulatory actions on the activity of the buccal and ventricular muscles and the central ganglionic neurons. This Lissachatina fulica (Giant African land snail) protein is Fulicin peptides.